Reading from the N-terminus, the 299-residue chain is Serpentine receptor class gamma-30 (299 aa).

7 helical membrane passes run 18–38 (GIQF…IKVL), 59–79 (ILSV…NYIP), 98–118 (ILFI…FMVV), 137–157 (IIPH…WTAF), 189–209 (IISS…MLCI), 223–243 (LTAS…MNIY), and 260–280 (ALTA…MLCL).

Belongs to the nematode receptor-like protein srg family.

Its subcellular location is the membrane. This chain is Serpentine receptor class gamma-30 (srg-30), found in Caenorhabditis elegans.